A 237-amino-acid polypeptide reads, in one-letter code: Ribosomal RNA small subunit methyltransferase G (237 aa).

S-adenosyl-L-methionine contacts are provided by residues Gly-78, Phe-83, 129-130, and Arg-148; that span reads AE. Residues 218 to 237 form a disordered region; it reads KKETPNKYPRKAGMPNKRPL.

This sequence belongs to the methyltransferase superfamily. RNA methyltransferase RsmG family.

The protein localises to the cytoplasm. Specifically methylates the N7 position of a guanine in 16S rRNA. This Streptococcus gordonii (strain Challis / ATCC 35105 / BCRC 15272 / CH1 / DL1 / V288) protein is Ribosomal RNA small subunit methyltransferase G.